Reading from the N-terminus, the 776-residue chain is MADRSAIQLIDEEKEFHQSALQYFQQCIGNRDVGLDYHVISVFGSQSSGKSTLLNVLFNTNFDTMDAQVKRQQTTKGIWLAHTKQVNTTIEIDNDRPDIFVLDVEGSDGSERGEDQDFERKAALFAIAVSEVLIVNMWEQQIGLYQGNNMALLKTVFEVNLSLFGKNDNDHKVLLLFVIRDHVGVTPLSSLSDSVTRELEKIWTELSKPAGCEGSSLYDYFDLKFVGLAHKLLQEDKFTQDVKKLGDSFVMKGTENYYFKPQYHHRLPLDGWTMYAENCWDQIERNKDLDLPTQQILVARFKTEEISNEALEEFISKYDESIAPLKGNLGSLTSQLVKLKEECLTKYDEQASRYARNVYMEKREALNTNLNSHISGTINEFLESLMEKLWDDLKLEVSSRDKATTSFVESVAAGKSKIEKEFNESMETFKKLGLLISNEEITCKFSDDIEERIKQLRDAELKAKIGRIKKNLVPELKDHVIHLLSHPSKKVWDDIMNDFESTIKDNISAYQVEKDKYDFKIGLSESENAKIYKNIRILAWRTLDTTVHDYLKIDTIVSILRDRFEDVFRYDAEGSPRLWKTEEEIDGTFRVAKEHALEVFEVLSLAVTSDNVEIIPDVPMAEEESGEDNEIYRDNEGVFHSRRFAHILTELQKENVLDQFRRQINITVLDSKRSIITTRTHIPPWIYVLLAVLGWNEFVAVIRNPLFVTLTLILGATFFVIHKFGLWGPVVNVVQSAVGETRTAIKDKLRQFVVEDHEVKESFEMKDFSKNEQKEK.

Topologically, residues 1–681 (MADRSAIQLI…KRSIITTRTH (681 aa)) are cytoplasmic. Residues 34–263 (GLDYHVISVF…TENYYFKPQY (230 aa)) form the GB1/RHD3-type G domain. 44-51 (GSQSSGKS) is a GTP binding site. Residues 682–702 (IPPWIYVLLAVLGWNEFVAVI) traverse the membrane as a helical segment. At 703–705 (RNP) the chain is on the lumenal side. The chain crosses the membrane as a helical span at residues 706–726 (LFVTLTLILGATFFVIHKFGL). The Cytoplasmic segment spans residues 727-776 (WGPVVNVVQSAVGETRTAIKDKLRQFVVEDHEVKESFEMKDFSKNEQKEK).

The protein belongs to the TRAFAC class dynamin-like GTPase superfamily. GB1/RHD3 GTPase family. RHD3 subfamily. In terms of assembly, interacts with RTN1 and YOP1; GTP binding is not required for these interactions.

It is found in the endoplasmic reticulum membrane. In terms of biological role, cooperates with the reticulon proteins RTN1 and RTN2 and the tubule-shaping DP1 family protein YOP1 to generate and maintain the structure of the tubular endoplasmic reticulum network. Has GTPase activity, which is required for its function in ER organization. This is Protein SEY1 from Saccharomyces cerevisiae (strain RM11-1a) (Baker's yeast).